The sequence spans 187 residues: Resolvase OPG149 (187 aa).

This sequence belongs to the RuvC family. Poxviruses-type subfamily. It depends on Mg(2+) as a cofactor.

In terms of biological role, plays a role in DNA replication by cleaving viral DNA concatamers to yield unit-length viral genomes. The concatamer junctions contain inverted repeat sequences that can be extruded as cruciforms, yielding Holliday junctions that A22 protein cleaves. The polypeptide is Resolvase OPG149 (OPG149) (Vaccinia virus (strain Western Reserve) (VACV)).